Consider the following 31-residue polypeptide: Alpha-conotoxin Li1.12 (31 aa).

The propeptide occupies 1-15 (AGNAKMSALMALTIR). 2 disulfides stabilise this stretch: cysteine 17/cysteine 23 and cysteine 18/cysteine 30. Residue cysteine 30 is modified to Cysteine amide.

The protein belongs to the conotoxin A superfamily. Expressed by the venom duct.

It localises to the secreted. In terms of biological role, alpha-conotoxins act on postsynaptic membranes, they bind to the nicotinic acetylcholine receptors (nAChR) and thus inhibit them. This toxin inhibits alpha-3-beta-4, alpha-6/alpha-3-beta-4, and alpha-2-beta-4 nAChRs. This chain is Alpha-conotoxin Li1.12, found in Conus lividus (Livid cone).